The chain runs to 1534 residues: DNA-directed RNA polymerase subunit beta'' (1534 aa).

The Zn(2+) site is built by C220, C296, C303, and C306. Composition is skewed to basic and acidic residues over residues R644–E668 and P678–E688. 2 disordered regions span residues R644–Y698 and Y719–G800. Composition is skewed to acidic residues over residues G744–D762 and T770–S789.

It belongs to the RNA polymerase beta' chain family. RpoC2 subfamily. In terms of assembly, in plastids the minimal PEP RNA polymerase catalytic core is composed of four subunits: alpha, beta, beta', and beta''. When a (nuclear-encoded) sigma factor is associated with the core the holoenzyme is formed, which can initiate transcription. Requires Zn(2+) as cofactor.

The protein localises to the plastid. It is found in the chloroplast. The enzyme catalyses RNA(n) + a ribonucleoside 5'-triphosphate = RNA(n+1) + diphosphate. Functionally, DNA-dependent RNA polymerase catalyzes the transcription of DNA into RNA using the four ribonucleoside triphosphates as substrates. The sequence is that of DNA-directed RNA polymerase subunit beta'' from Saccharum hybrid (Sugarcane).